Consider the following 35-residue polypeptide: Photosystem II reaction center protein M (35 aa).

A helical membrane pass occupies residues 7 to 27 (GFLASLLFVLVPSVFLIVLYI).

This sequence belongs to the PsbM family. In terms of assembly, PSII is composed of 1 copy each of membrane proteins PsbA, PsbB, PsbC, PsbD, PsbE, PsbF, PsbH, PsbI, PsbJ, PsbK, PsbL, PsbM, PsbT, PsbX, PsbY, PsbZ, Psb30/Ycf12, peripheral proteins PsbO, CyanoQ (PsbQ), PsbU, PsbV and a large number of cofactors. It forms dimeric complexes.

It localises to the cellular thylakoid membrane. One of the components of the core complex of photosystem II (PSII). PSII is a light-driven water:plastoquinone oxidoreductase that uses light energy to abstract electrons from H(2)O, generating O(2) and a proton gradient subsequently used for ATP formation. It consists of a core antenna complex that captures photons, and an electron transfer chain that converts photonic excitation into a charge separation. This subunit is found at the monomer-monomer interface. In Synechococcus elongatus (strain ATCC 33912 / PCC 7942 / FACHB-805) (Anacystis nidulans R2), this protein is Photosystem II reaction center protein M.